Consider the following 420-residue polypeptide: Polymerase delta-interacting protein 3 (420 aa).

N-acetylalanine is present on alanine 2. The residue at position 5 (serine 5) is a Phosphoserine. Arginine 33 is subject to Omega-N-methylarginine. Phosphoserine is present on serine 127. Threonine 140 carries the phosphothreonine modification. A Glycyl lysine isopeptide (Lys-Gly) (interchain with G-Cter in SUMO2) cross-link involves residue lysine 200. Residues serine 215 and serine 217 each carry the phosphoserine modification. Residue lysine 223 forms a Glycyl lysine isopeptide (Lys-Gly) (interchain with G-Cter in SUMO2) linkage. The residue at position 244 (serine 244) is a Phosphoserine. Lysine 248 participates in a covalent cross-link: Glycyl lysine isopeptide (Lys-Gly) (interchain with G-Cter in SUMO2). The disordered stretch occupies residues threonine 256 to leucine 277. At serine 275 the chain carries Phosphoserine. One can recognise an RRM domain in the interval threonine 280–asparagine 351. Positions proline 369–proline 394 are disordered. Over residues serine 370–arginine 379 the composition is skewed to basic and acidic residues. Residue lysine 372 forms a Glycyl lysine isopeptide (Lys-Gly) (interchain with G-Cter in SUMO2) linkage. Serine 385 is modified (phosphoserine). Lysine 417 participates in a covalent cross-link: Glycyl lysine isopeptide (Lys-Gly) (interchain with G-Cter in SUMO2).

As to quaternary structure, interacts with POLD2. Interacts with NCBP1 and EIF4A3. Associates with the multiprotein exon junction complex (EJC). Interacts with RPS6KB1 (activated). Interacts with ERH. Interacts with THOC2, DDX39B and ZC3H11A; the interactions are ATP-dependent and indicative for an association with the TREX complex.

Its subcellular location is the nucleus. It localises to the nucleus speckle. The protein localises to the cytoplasm. In terms of biological role, is involved in regulation of translation. Is preferentially associated with CBC-bound spliced mRNA-protein complexes during the pioneer round of mRNA translation. Contributes to enhanced translational efficiency of spliced over nonspliced mRNAs. Recruits activated ribosomal protein S6 kinase beta-1 I/RPS6KB1 to newly synthesized mRNA. Involved in nuclear mRNA export; probably mediated by association with the TREX complex. The sequence is that of Polymerase delta-interacting protein 3 (Poldip3) from Mus musculus (Mouse).